The sequence spans 60 residues: Colanic acid capsular biosynthesis activation protein B (60 aa).

The protein is Colanic acid capsular biosynthesis activation protein B (rcsB) of Klebsiella aerogenes (Enterobacter aerogenes).